A 270-amino-acid polypeptide reads, in one-letter code: tRNA pseudouridine synthase A (270 aa).

The active-site Nucleophile is aspartate 51. Residue tyrosine 109 participates in substrate binding.

Belongs to the tRNA pseudouridine synthase TruA family. As to quaternary structure, homodimer.

The enzyme catalyses uridine(38/39/40) in tRNA = pseudouridine(38/39/40) in tRNA. In terms of biological role, formation of pseudouridine at positions 38, 39 and 40 in the anticodon stem and loop of transfer RNAs. The protein is tRNA pseudouridine synthase A of Burkholderia orbicola (strain MC0-3).